Consider the following 467-residue polypeptide: 3-isopropylmalate dehydratase large subunit (467 aa).

Cys-349, Cys-409, and Cys-412 together coordinate [4Fe-4S] cluster.

This sequence belongs to the aconitase/IPM isomerase family. LeuC type 1 subfamily. As to quaternary structure, heterodimer of LeuC and LeuD. Requires [4Fe-4S] cluster as cofactor.

The enzyme catalyses (2R,3S)-3-isopropylmalate = (2S)-2-isopropylmalate. Its pathway is amino-acid biosynthesis; L-leucine biosynthesis; L-leucine from 3-methyl-2-oxobutanoate: step 2/4. Its function is as follows. Catalyzes the isomerization between 2-isopropylmalate and 3-isopropylmalate, via the formation of 2-isopropylmaleate. This chain is 3-isopropylmalate dehydratase large subunit, found in Vibrio cholerae serotype O1 (strain ATCC 39541 / Classical Ogawa 395 / O395).